A 397-amino-acid polypeptide reads, in one-letter code: Acetate kinase 1 (397 aa).

A Mg(2+)-binding site is contributed by N8. K15 serves as a coordination point for ATP. R89 lines the substrate pocket. Residue D146 is the Proton donor/acceptor of the active site. ATP is bound by residues 206-210 (HLGNG), 281-283 (DLR), and 329-333 (GIGEN). E382 contacts Mg(2+).

Belongs to the acetokinase family. In terms of assembly, homodimer. Requires Mg(2+) as cofactor. The cofactor is Mn(2+).

The protein resides in the cytoplasm. The enzyme catalyses acetate + ATP = acetyl phosphate + ADP. Its pathway is metabolic intermediate biosynthesis; acetyl-CoA biosynthesis; acetyl-CoA from acetate: step 1/2. Functionally, catalyzes the formation of acetyl phosphate from acetate and ATP. Can also catalyze the reverse reaction. The polypeptide is Acetate kinase 1 (Listeria innocua serovar 6a (strain ATCC BAA-680 / CLIP 11262)).